The sequence spans 201 residues: ATP-dependent Clp protease proteolytic subunit (201 aa).

Serine 101 serves as the catalytic Nucleophile. Histidine 126 is an active-site residue.

Belongs to the peptidase S14 family. Component of the chloroplastic Clp protease core complex.

Its subcellular location is the plastid. It localises to the chloroplast stroma. It catalyses the reaction Hydrolysis of proteins to small peptides in the presence of ATP and magnesium. alpha-casein is the usual test substrate. In the absence of ATP, only oligopeptides shorter than five residues are hydrolyzed (such as succinyl-Leu-Tyr-|-NHMec, and Leu-Tyr-Leu-|-Tyr-Trp, in which cleavage of the -Tyr-|-Leu- and -Tyr-|-Trp bonds also occurs).. Cleaves peptides in various proteins in a process that requires ATP hydrolysis. Has a chymotrypsin-like activity. Plays a major role in the degradation of misfolded proteins. In Staurastrum punctulatum (Green alga), this protein is ATP-dependent Clp protease proteolytic subunit.